The sequence spans 258 residues: UPF0758 protein Bamb_2548 (258 aa).

The interval 1–43 (MLSPCLAAPATECRDPADAPAAPARHTGPARPRKRRPRNWKPH) is disordered. Residues 31 to 43 (RPRKRRPRNWKPH) show a composition bias toward basic residues. Residues 136-258 (QIDSPGAVED…TFSFARAGWL (123 aa)) form the MPN domain. Residues histidine 207, histidine 209, and aspartate 220 each contribute to the Zn(2+) site. Positions 207–220 (HNHPSGAVQPSAED) match the JAMM motif motif.

It belongs to the UPF0758 family.

The polypeptide is UPF0758 protein Bamb_2548 (Burkholderia ambifaria (strain ATCC BAA-244 / DSM 16087 / CCUG 44356 / LMG 19182 / AMMD) (Burkholderia cepacia (strain AMMD))).